Here is a 448-residue protein sequence, read N- to C-terminus: MPATAEAADAATQATDAFSTKLEENKLPEGQERGPEEEEDDDDDETPAPGDAEKKKKKKKKSGAKKKKSKTAKAVMEQTEPPSIGLTKMFPNGVFPVGEVQQYDETKFDESRKRVTGEELRERERLIQEKDGFNYNFIRRAAEVHRQVRQYAQRTIKPGMSMTEIANMIEDGTRALVEVNGFESGIGFPTGLSLNEVAAHYTPNAGDKRILQSGDVLKVDFGVQVKGRIVDSAFTMNFEPTYDPLLAAVRAATNTGVKEAGIDARLGEVGAAIQEVMESHEFEAEGKTHQVKCIRNLQGHDIAPYRIHGGKSVPIVAVPNLDVKMEEGETFAIETFGSTGRGYVVDSGECSHYARQANPPHVSLRINSARQLLYTINKNFGSLPFCRRYLDRLGEQNYLLGLRHLVSQGVVQDYPPLADVPGCMTAQFEHTILLRPTCKEVVSRGDDY.

Residues 1–17 (MPATAEAADAATQATDA) are compositionally biased toward low complexity. Residues 1–87 (MPATAEAADA…QTEPPSIGLT (87 aa)) are disordered. The span at 21–34 (KLEENKLPEGQERG) shows a compositional bias: basic and acidic residues. A compositionally biased stretch (acidic residues) spans 35–46 (PEEEEDDDDDET). A compositionally biased stretch (basic residues) spans 55–71 (KKKKKKKSGAKKKKSKT). His-200 provides a ligand contact to substrate. A divalent metal cation is bound by residues Asp-220, Asp-231, and His-300. His-308 is a substrate binding site. Positions 334 and 429 each coordinate a divalent metal cation.

It belongs to the peptidase M24A family. Methionine aminopeptidase eukaryotic type 2 subfamily. It depends on Co(2+) as a cofactor. Zn(2+) is required as a cofactor. Requires Mn(2+) as cofactor. The cofactor is Fe(2+).

The protein resides in the cytoplasm. It catalyses the reaction Release of N-terminal amino acids, preferentially methionine, from peptides and arylamides.. Cotranslationally removes the N-terminal methionine from nascent proteins. The N-terminal methionine is often cleaved when the second residue in the primary sequence is small and uncharged (Met-Ala-, Cys, Gly, Pro, Ser, Thr, or Val). The sequence is that of Methionine aminopeptidase 2 from Malassezia globosa (strain ATCC MYA-4612 / CBS 7966) (Dandruff-associated fungus).